A 274-amino-acid polypeptide reads, in one-letter code: Formamidopyrimidine-DNA glycosylase (274 aa).

Pro-2 acts as the Schiff-base intermediate with DNA in catalysis. Glu-3 (proton donor) is an active-site residue. The active-site Proton donor; for beta-elimination activity is the Lys-57. His-90, Arg-109, and Lys-150 together coordinate DNA. Residues 235-269 (FVYGRKDKACLICGHTIESIKQGQRSTFFCRHCQH) form an FPG-type zinc finger. Arg-259 functions as the Proton donor; for delta-elimination activity in the catalytic mechanism.

Belongs to the FPG family. Monomer. Zn(2+) serves as cofactor.

The enzyme catalyses Hydrolysis of DNA containing ring-opened 7-methylguanine residues, releasing 2,6-diamino-4-hydroxy-5-(N-methyl)formamidopyrimidine.. It carries out the reaction 2'-deoxyribonucleotide-(2'-deoxyribose 5'-phosphate)-2'-deoxyribonucleotide-DNA = a 3'-end 2'-deoxyribonucleotide-(2,3-dehydro-2,3-deoxyribose 5'-phosphate)-DNA + a 5'-end 5'-phospho-2'-deoxyribonucleoside-DNA + H(+). In terms of biological role, involved in base excision repair of DNA damaged by oxidation or by mutagenic agents. Acts as a DNA glycosylase that recognizes and removes damaged bases. Has a preference for oxidized purines, such as 7,8-dihydro-8-oxoguanine (8-oxoG). Has AP (apurinic/apyrimidinic) lyase activity and introduces nicks in the DNA strand. Cleaves the DNA backbone by beta-delta elimination to generate a single-strand break at the site of the removed base with both 3'- and 5'-phosphates. The polypeptide is Formamidopyrimidine-DNA glycosylase (Proteus mirabilis (strain HI4320)).